The following is a 146-amino-acid chain: Hemoglobin subunit beta (146 aa).

N-acetylvaline is present on Val-1. In terms of domain architecture, Globin spans Glu-2–His-146. A Phosphoserine modification is found at Ser-44. Lys-59 bears the N6-acetyllysine mark. A heme b-binding site is contributed by His-63. Lys-82 carries the post-translational modification N6-acetyllysine. His-92 provides a ligand contact to heme b. Cys-93 is subject to S-nitrosocysteine. An N6-acetyllysine modification is found at Lys-144.

It belongs to the globin family. In terms of assembly, heterotetramer of two alpha chains and two beta chains. As to expression, red blood cells.

Functionally, involved in oxygen transport from the lung to the various peripheral tissues. This chain is Hemoglobin subunit beta (HBB), found in Ceratotherium simum (White rhinoceros).